A 465-amino-acid chain; its full sequence is Hexokinase type 1 (465 aa).

One can recognise a Hexokinase domain in the interval 8 to 447 (EEDFPEVYKV…CGVGAAIMAG (440 aa)). The segment at 65–197 (TGRERGQFLA…EISVDVMGII (133 aa)) is hexokinase small subdomain. Residue K88 participates in ATP binding. The glucose-binding stretch occupies residues 139–165 (PLGIAFAFTLKKLALDVGILVSWTKEF). The hexokinase large subdomain stretch occupies residues 198–436 (NVGAGSLLAL…YNFEFVITQD (239 aa)).

The protein belongs to the hexokinase family.

It catalyses the reaction a D-hexose + ATP = a D-hexose 6-phosphate + ADP + H(+). The enzyme catalyses D-mannose + ATP = D-mannose 6-phosphate + ADP + H(+). The catalysed reaction is D-fructose + ATP = D-fructose 6-phosphate + ADP + H(+). It carries out the reaction D-glucose + ATP = D-glucose 6-phosphate + ADP + H(+). The protein operates within carbohydrate metabolism; hexose metabolism. It participates in carbohydrate degradation; glycolysis; D-glyceraldehyde 3-phosphate and glycerone phosphate from D-glucose: step 1/4. Functionally, catalyzes the phosphorylation of various hexoses to hexose 6-phosphate. The protein is Hexokinase type 1 (Hex-t1) of Drosophila melanogaster (Fruit fly).